The sequence spans 1430 residues: Death-associated protein kinase 1 (1430 aa).

The Protein kinase domain occupies 13 to 275 (YDTGEELGSG…IQDSLQHPWI (263 aa)). Residues 19–27 (LGSGQFAVV), lysine 42, 94–96 (ELV), and glutamate 100 each bind ATP. The Proton acceptor role is filled by aspartate 139. Aspartate 161 is an ATP binding site. The tract at residues 267 to 334 (QDSLQHPWIK…RSNMSVARSD (68 aa)) is calmodulin-binding. Serine 289 bears the Phosphoserine; by RPS6KA1 and RPS6KA3 mark. The interval 292–301 (NMEKFKKFAA) is autoinhibitory domain. At serine 308 the chain carries Phosphoserine; by autocatalysis. 2 positions are modified to phosphoserine: serine 319 and serine 333. ANK repeat units lie at residues 378–407 (HGTPPLLIAAGCGNIQILQLLIKRGSRIDV), 411–440 (GGSNAVYWAARHGHVDTLKFLSENKCPLDV), 444–473 (SGEMALHVAARYGHADVAQLLCSFGSNPNI), 477–506 (EEETPLHCAAWHGYYSVAKALCEAGCNVNI), 510–539 (EGETPLLTASARGYHDIVECLAEHGADLNA), 543–572 (DGHIALHLAVRRCQMEVIKTLLSQGCFVDY), 576–605 (HGNTPLHVACKDGNMPIVVALCEANCNLDI), and 609–638 (YGRTPLHLAANNGILDVVRYLCLMGASVEA). One can recognise a Roc domain in the interval 681–955 (TQNLQPRIKL…NHLQEIRSQI (275 aa)). Phosphoserine; by MAPK1 is present on serine 734. Residues 875–904 (KLKNPLQVVLVATHADIMNVPRPAGGEFGY) form an ANK 9 repeat. Serine 1115 carries the post-translational modification Phosphoserine. One copy of the ANK 10 repeat lies at 1162–1196 (EGDADIRLWVNGCKLANRGAELLVLLVNHGQGIEV). The Death domain occupies 1312–1396 (KLSRLLDPPD…DAADFLLKAS (85 aa)).

This sequence belongs to the protein kinase superfamily. CAMK Ser/Thr protein kinase family. DAP kinase subfamily. Interacts with KLHL20. Interacts (via death domain) with MAPK1 and MAPK3. Interacts with MAP1B (via N-terminus). Interacts with PRKD1 in an oxidative stress-regulated manner. Interacts with PIN1, PDCD6, BECN1, TSC2 and STX1A. Interacts (via kinase domain) with DAPK3 (via kinase domain). Interacts with GRINB. Interacts (via death domain) with UNC5B (via death domain). Interacts with UNC5C (via death domain). Mg(2+) is required as a cofactor. Ubiquitinated by the BCR(KLHL20) E3 ubiquitin ligase complex, leading to its degradation by the proteasome. In terms of processing, removal of the C-terminal tail of isoform 2 (corresponding to amino acids 296-337 of isoform 2) by proteolytic cleavage stimulates maximally its membrane-blebbing function. Post-translationally, in response to mitogenic stimulation (PMA or EGF), phosphorylated at Ser-289; phosphorylation suppresses DAPK1 pro-apoptotic function. Autophosphorylation at Ser-308 inhibits its catalytic activity. Phosphorylation at Ser-734 by MAPK1 increases its catalytic activity and promotes cytoplasmic retention of MAPK1. Endoplasmic-stress can cause dephosphorylation at Ser-308. As to expression, isoform 2 is expressed in normal intestinal tissue as well as in colorectal carcinomas.

Its subcellular location is the cytoplasm. It is found in the cytoskeleton. The catalysed reaction is L-seryl-[protein] + ATP = O-phospho-L-seryl-[protein] + ADP + H(+). The enzyme catalyses L-threonyl-[protein] + ATP = O-phospho-L-threonyl-[protein] + ADP + H(+). Activated by Ca(2+)/calmodulin. Regulated by a locking mechanism, involving autophosphorylation at Ser-308 and calmodulin binding. In the inactive state, Ser-308 is phosphorylated. Activation involves its dephosphorylation and a release-of-autoinhibition mechanism where binding of calmodulin induces a conformational change that relieves the steric block of the active site by the autoinhibitory domain. Activity is modulated by UNC5B and NTN1. UNC5B activates it by inhibiting the phosphorylation at Ser-308, whereas NTN1 inhibits UNC5B-mediated activation of DAPK1. Endoplasmic-stress activates by causing Ser-308 dephosphorylation. Calcium/calmodulin-dependent serine/threonine kinase involved in multiple cellular signaling pathways that trigger cell survival, apoptosis, and autophagy. Regulates both type I apoptotic and type II autophagic cell deaths signal, depending on the cellular setting. The former is caspase-dependent, while the latter is caspase-independent and is characterized by the accumulation of autophagic vesicles. Phosphorylates PIN1 resulting in inhibition of its catalytic activity, nuclear localization, and cellular function. Phosphorylates TPM1, enhancing stress fiber formation in endothelial cells. Phosphorylates STX1A and significantly decreases its binding to STXBP1. Phosphorylates PRKD1 and regulates JNK signaling by binding and activating PRKD1 under oxidative stress. Phosphorylates BECN1, reducing its interaction with BCL2 and BCL2L1 and promoting the induction of autophagy. Phosphorylates TSC2, disrupting the TSC1-TSC2 complex and stimulating mTORC1 activity in a growth factor-dependent pathway. Phosphorylates RPS6, MYL9 and DAPK3. Acts as a signaling amplifier of NMDA receptors at extrasynaptic sites for mediating brain damage in stroke. Cerebral ischemia recruits DAPK1 into the NMDA receptor complex and it phosphorylates GRINB at Ser-1303 inducing injurious Ca(2+) influx through NMDA receptor channels, resulting in an irreversible neuronal death. Required together with DAPK3 for phosphorylation of RPL13A upon interferon-gamma activation which is causing RPL13A involvement in transcript-selective translation inhibition. In terms of biological role, isoform 2 cannot induce apoptosis but can induce membrane blebbing. The polypeptide is Death-associated protein kinase 1 (DAPK1) (Homo sapiens (Human)).